The sequence spans 312 residues: Pantothenate kinase (312 aa).

ATP is bound at residue 97-104; that stretch reads GSVAVGKS.

Belongs to the prokaryotic pantothenate kinase family.

Its subcellular location is the cytoplasm. It catalyses the reaction (R)-pantothenate + ATP = (R)-4'-phosphopantothenate + ADP + H(+). It functions in the pathway cofactor biosynthesis; coenzyme A biosynthesis; CoA from (R)-pantothenate: step 1/5. The sequence is that of Pantothenate kinase (coaA) from Mycobacterium leprae (strain TN).